The primary structure comprises 151 residues: Large ribosomal subunit protein uL13 (151 aa).

It belongs to the universal ribosomal protein uL13 family. As to quaternary structure, part of the 50S ribosomal subunit.

In terms of biological role, this protein is one of the early assembly proteins of the 50S ribosomal subunit, although it is not seen to bind rRNA by itself. It is important during the early stages of 50S assembly. In Picosynechococcus sp. (strain ATCC 27264 / PCC 7002 / PR-6) (Agmenellum quadruplicatum), this protein is Large ribosomal subunit protein uL13.